A 455-amino-acid chain; its full sequence is Golgi pH regulator (455 aa).

Transmembrane regions (helical) follow at residues 5-25, 46-66, 79-99, 114-134, and 150-170; these read IDSSIMITSQILFFGFGWLFF, VTFAFSCTMFELIIFEILGVL, LCVILLILVFMVPFYIGYFIV, CLLWLTFMYFFWKLGDPFPIL, and VGVIGVTLMALLSGFGAVNCP. N180 and N243 each carry an N-linked (GlcNAc...) asparagine glycan. 4 consecutive transmembrane segments (helical) span residues 290 to 310, 343 to 363, 378 to 398, and 425 to 445; these read GYFFSIYCVWKIFMATINIVF, ISFILVGIIIVTSIRGLLITL, VIVLLLAQIMGMYFVSSVLLI, and WFDVIFLVSALSSILFLYLAH.

Belongs to the Golgi pH regulator (TC 1.A.38) family. As to quaternary structure, homotrimer. Interacts with RABL3; the interaction stabilizes GPR89A.

It localises to the golgi apparatus membrane. The enzyme catalyses iodide(out) = iodide(in). It catalyses the reaction chloride(in) = chloride(out). The catalysed reaction is bromide(in) = bromide(out). It carries out the reaction fluoride(in) = fluoride(out). Functionally, voltage-gated channel that enables the transfer of monoatomic anions such as iodide, chloride, bromide and fluoride which may function in counter-ion conductance and participates in Golgi acidification. Plays a role in lymphocyte development, probably by acting as a RABL3 effector in hematopoietic cells. The chain is Golgi pH regulator from Bos taurus (Bovine).